A 194-amino-acid polypeptide reads, in one-letter code: MKNLFYSFVSGSEYLVLVALDTEGCVYYASAGELNSQASMVELMEKDFLKAPEFRVNSLNSASSSLVNKKSEVKIKDTLEKFKSLIDFENKDEKIPYKVVFGTPLQRKVWDYLVNELPVGSISTYQKIAQHLGMPNSSRAIGNCVGANRIAVVIPCHRVIGSSGKITGYRYGTNIKKTILQNELGSKYGSTITN.

Positions 125 and 139 each coordinate DNA. Cysteine 156 functions as the Nucleophile; methyl group acceptor in the catalytic mechanism. Residue serine 162 participates in DNA binding.

It belongs to the MGMT family.

The protein localises to the nucleus. It catalyses the reaction a 6-O-methyl-2'-deoxyguanosine in DNA + L-cysteinyl-[protein] = S-methyl-L-cysteinyl-[protein] + a 2'-deoxyguanosine in DNA. The enzyme catalyses a 4-O-methyl-thymidine in DNA + L-cysteinyl-[protein] = a thymidine in DNA + S-methyl-L-cysteinyl-[protein]. Functionally, involved in the cellular defense against the biological effects of O6-methylguanine (O6-MeG) and O4-methylthymine (O4-MeT) in DNA. Repairs the methylated nucleobase in DNA by stoichiometrically transferring the methyl group to a cysteine residue in the enzyme. This is a suicide reaction: the enzyme is irreversibly inactivated. This chain is Methylated-DNA--protein-cysteine methyltransferase (MGT1), found in Scheffersomyces stipitis (strain ATCC 58785 / CBS 6054 / NBRC 10063 / NRRL Y-11545) (Yeast).